The following is a 626-amino-acid chain: tRNA uridine 5-carboxymethylaminomethyl modification enzyme MnmG (626 aa).

14-19 (GAGHAG) contacts FAD. 273-287 (GPRYCPSIEDKVVRF) is an NAD(+) binding site.

It belongs to the MnmG family. As to quaternary structure, homodimer. Heterotetramer of two MnmE and two MnmG subunits. The cofactor is FAD.

Its subcellular location is the cytoplasm. NAD-binding protein involved in the addition of a carboxymethylaminomethyl (cmnm) group at the wobble position (U34) of certain tRNAs, forming tRNA-cmnm(5)s(2)U34. The polypeptide is tRNA uridine 5-carboxymethylaminomethyl modification enzyme MnmG (Caldicellulosiruptor saccharolyticus (strain ATCC 43494 / DSM 8903 / Tp8T 6331)).